The following is a 226-amino-acid chain: V-type proton ATPase subunit E (226 aa).

Belongs to the V-ATPase E subunit family. In terms of assembly, V-ATPase is a heteromultimeric enzyme made up of two complexes: the ATP-hydrolytic V1 complex and the proton translocation V0 complex. The V1 complex consists of three catalytic AB heterodimers that form a heterohexamer, three peripheral stalks each consisting of EG heterodimers, one central rotor including subunits D and F, and the regulatory subunits C and H. The proton translocation complex V0 consists of the proton transport subunit a, a ring of proteolipid subunits c9c'', rotary subunit d, subunits e and f, and the accessory subunits VhaAC45 and ATP6AP2.

Subunit of the V1 complex of vacuolar(H+)-ATPase (V-ATPase), a multisubunit enzyme composed of a peripheral complex (V1) that hydrolyzes ATP and a membrane integral complex (V0) that translocates protons. V-ATPase is responsible for acidifying and maintaining the pH of intracellular compartments and in some cell types, is targeted to the plasma membrane, where it is responsible for acidifying the extracellular environment. The chain is V-type proton ATPase subunit E (Vha26) from Drosophila melanogaster (Fruit fly).